We begin with the raw amino-acid sequence, 439 residues long: Transcription factor pydF (439 aa).

Residues 1-18 (MGRPQRADKQRRETDGPQ) are compositionally biased toward basic and acidic residues. Disordered stretches follow at residues 1-53 (MGRP…GYAR), 143-177 (HVEKATAERPGNDGSSSPSSSLLRTSSSPSQQAVE), and 239-262 (AFRDGQNNGTSRPNTAASQNMQQH). The span at 20-35 (SRPSLTQAQKNSTTIR) shows a compositional bias: polar residues. Residues 143 to 153 (HVEKATAERPG) are compositionally biased toward basic and acidic residues. Residues 157–172 (SSSPSSSLLRTSSSPS) show a composition bias toward low complexity. Residues 243-260 (GQNNGTSRPNTAASQNMQ) show a composition bias toward polar residues.

The protein localises to the nucleus. Transcription factor; part of the gene cluster that mediates the biosynthesis of pyrrocidines, fungal natural products containing a macrocyclic para-cyclophane connected to a decahydrofluorene ring system that show potent antibiotic activities toward Gram-negative bacteria. In Acremonium sp, this protein is Transcription factor pydF.